The chain runs to 134 residues: Phosphoribosyl-AMP cyclohydrolase (134 aa).

Position 78 (D78) interacts with Mg(2+). C79 contacts Zn(2+). Residues D80 and D82 each contribute to the Mg(2+) site. Residues C96 and C103 each coordinate Zn(2+).

This sequence belongs to the PRA-CH family. As to quaternary structure, homodimer. Requires Mg(2+) as cofactor. Zn(2+) is required as a cofactor.

It is found in the cytoplasm. The enzyme catalyses 1-(5-phospho-beta-D-ribosyl)-5'-AMP + H2O = 1-(5-phospho-beta-D-ribosyl)-5-[(5-phospho-beta-D-ribosylamino)methylideneamino]imidazole-4-carboxamide. The protein operates within amino-acid biosynthesis; L-histidine biosynthesis; L-histidine from 5-phospho-alpha-D-ribose 1-diphosphate: step 3/9. Its function is as follows. Catalyzes the hydrolysis of the adenine ring of phosphoribosyl-AMP. The chain is Phosphoribosyl-AMP cyclohydrolase from Cupriavidus taiwanensis (strain DSM 17343 / BCRC 17206 / CCUG 44338 / CIP 107171 / LMG 19424 / R1) (Ralstonia taiwanensis (strain LMG 19424)).